The chain runs to 433 residues: 23S rRNA (uracil(1939)-C(5))-methyltransferase RlmD (433 aa).

The region spanning 10 to 68 is the TRAM domain; that stretch reads RTTTRQIITVSVNDLDSFGQGVARHNGKTLFIPGLLPQENAEVAVTEDKKQYARAKVVR. 4 residues coordinate [4Fe-4S] cluster: Cys81, Cys87, Cys90, and Cys162. Positions 265, 294, 299, 315, 342, and 363 each coordinate S-adenosyl-L-methionine. Cys389 serves as the catalytic Nucleophile.

It belongs to the class I-like SAM-binding methyltransferase superfamily. RNA M5U methyltransferase family. RlmD subfamily.

It catalyses the reaction uridine(1939) in 23S rRNA + S-adenosyl-L-methionine = 5-methyluridine(1939) in 23S rRNA + S-adenosyl-L-homocysteine + H(+). Functionally, catalyzes the formation of 5-methyl-uridine at position 1939 (m5U1939) in 23S rRNA. This is 23S rRNA (uracil(1939)-C(5))-methyltransferase RlmD from Shigella flexneri serotype 5b (strain 8401).